A 173-amino-acid chain; its full sequence is Zinc finger A20 and AN1 domain-containing stress-associated protein 2 (173 aa).

An A20-type zinc finger spans residues 12–46 (PEGPKLCTNNCGFFGSAATMNMCSKCHKDMLFQQE). Zn(2+)-binding residues include cysteine 18, cysteine 22, cysteine 34, cysteine 37, cysteine 114, cysteine 117, cysteine 128, cysteine 130, cysteine 135, histidine 138, histidine 144, and cysteine 146. The AN1-type zinc finger occupies 108-154 (PKGPSRCTTCNKRVGLTGFKCRCGSLFCGTHRYADVHDCSFNYHAAA).

In terms of biological role, may be involved in environmental stress response. This is Zinc finger A20 and AN1 domain-containing stress-associated protein 2 (SAP2) from Arabidopsis thaliana (Mouse-ear cress).